Reading from the N-terminus, the 278-residue chain is Pantothenate synthetase (278 aa).

30 to 37 is a binding site for ATP; that stretch reads MGFLHEGH. His-37 serves as the catalytic Proton donor. Gln-61 is a binding site for (R)-pantoate. Gln-61 contributes to the beta-alanine binding site. Residue 147–150 coordinates ATP; that stretch reads GQKD. Gln-153 is a binding site for (R)-pantoate. ATP contacts are provided by residues Val-176 and 184-187; that span reads LSSR.

Belongs to the pantothenate synthetase family. In terms of assembly, homodimer.

Its subcellular location is the cytoplasm. It carries out the reaction (R)-pantoate + beta-alanine + ATP = (R)-pantothenate + AMP + diphosphate + H(+). It participates in cofactor biosynthesis; (R)-pantothenate biosynthesis; (R)-pantothenate from (R)-pantoate and beta-alanine: step 1/1. Catalyzes the condensation of pantoate with beta-alanine in an ATP-dependent reaction via a pantoyl-adenylate intermediate. The sequence is that of Pantothenate synthetase from Thermosipho africanus (strain TCF52B).